The chain runs to 229 residues: Synaptogyrin-3 (229 aa).

Residue Met1 is modified to N-acetylmethionine. Residues 20–172 (FARRPQTLLR…LTVKALQRFR (153 aa)) form the MARVEL domain. 4 helical membrane passes run 30–50 (VVSW…GYVN), 70–90 (FGVV…LLDV), 105–125 (VLLD…GFCF), and 148–168 (AAIA…VKAL). A compositionally biased stretch (polar residues) spans 209-223 (QSPPFTETLDTSSKG). The segment at 209 to 229 (QSPPFTETLDTSSKGYQVPAY) is disordered.

This sequence belongs to the synaptogyrin family. Interacts (via N-terminus) with SLC6A3 (via N-terminus). May interact with VMAT2. In terms of tissue distribution, specifically expressed in brain. Found in the brain across the dorsal and ventral corpus striatum as well as in the cortex.

The protein resides in the cytoplasmic vesicle. It is found in the secretory vesicle. It localises to the synaptic vesicle membrane. The protein localises to the synapse. May play a role in regulated exocytosis. May indirectly regulate the activity of the plasma membrane dopamine transporter SLC6A3 and thereby regulate dopamine transport back from the synaptic cleft into the presynaptic terminal. This Mus musculus (Mouse) protein is Synaptogyrin-3.